Here is a 408-residue protein sequence, read N- to C-terminus: Argininosuccinate synthase (408 aa).

ATP contacts are provided by residues 10–18 (AYSGGLDTS) and A37. 2 residues coordinate L-citrulline: Y90 and S95. G120 contributes to the ATP binding site. Residues T122, N126, and D127 each coordinate L-aspartate. Position 126 (N126) interacts with L-citrulline. 5 residues coordinate L-citrulline: R130, S181, S190, E266, and Y278.

This sequence belongs to the argininosuccinate synthase family. Type 1 subfamily. Homotetramer.

It is found in the cytoplasm. It carries out the reaction L-citrulline + L-aspartate + ATP = 2-(N(omega)-L-arginino)succinate + AMP + diphosphate + H(+). It functions in the pathway amino-acid biosynthesis; L-arginine biosynthesis; L-arginine from L-ornithine and carbamoyl phosphate: step 2/3. This is Argininosuccinate synthase from Cereibacter sphaeroides (strain ATCC 17029 / ATH 2.4.9) (Rhodobacter sphaeroides).